Here is a 110-residue protein sequence, read N- to C-terminus: Insulin (110 aa).

The signal sequence occupies residues 1 to 24 (MALWMRLLPLLALLALWGPDPVPA). Intrachain disulfides connect Cys31-Cys96, Cys43-Cys109, and Cys95-Cys100. The propeptide at 57–87 (EAEDPQVGQVELGGGPGAGSLQPLALEGSLQ) is c peptide.

It belongs to the insulin family. As to quaternary structure, heterodimer of a B chain and an A chain linked by two disulfide bonds.

Its subcellular location is the secreted. Its function is as follows. Insulin decreases blood glucose concentration. It increases cell permeability to monosaccharides, amino acids and fatty acids. It accelerates glycolysis, the pentose phosphate cycle, and glycogen synthesis in liver. This chain is Insulin (INS), found in Chlorocebus aethiops (Green monkey).